We begin with the raw amino-acid sequence, 377 residues long: Nitric oxide reductase FlRd-NAD(+) reductase (377 aa).

This sequence belongs to the FAD-dependent oxidoreductase family. The cofactor is FAD.

Its subcellular location is the cytoplasm. It catalyses the reaction 2 reduced [nitric oxide reductase rubredoxin domain] + NAD(+) + H(+) = 2 oxidized [nitric oxide reductase rubredoxin domain] + NADH. It participates in nitrogen metabolism; nitric oxide reduction. In terms of biological role, one of at least two accessory proteins for anaerobic nitric oxide (NO) reductase. Reduces the rubredoxin moiety of NO reductase. In Salmonella paratyphi B (strain ATCC BAA-1250 / SPB7), this protein is Nitric oxide reductase FlRd-NAD(+) reductase.